Reading from the N-terminus, the 77-residue chain is Translation initiation factor IF-1, chloroplastic (77 aa).

The region spanning 1–71 is the S1-like domain; that stretch reads MKEQKLIHEG…TRGRIIYRLR (71 aa).

This sequence belongs to the IF-1 family. In terms of assembly, component of the 30S ribosomal translation pre-initiation complex which assembles on the 30S ribosome in the order IF-2 and IF-3, IF-1 and N-formylmethionyl-tRNA(fMet); mRNA recruitment can occur at any time during PIC assembly.

The protein resides in the plastid. It is found in the chloroplast. Its function is as follows. One of the essential components for the initiation of protein synthesis. Stabilizes the binding of IF-2 and IF-3 on the 30S subunit to which N-formylmethionyl-tRNA(fMet) subsequently binds. Helps modulate mRNA selection, yielding the 30S pre-initiation complex (PIC). Upon addition of the 50S ribosomal subunit IF-1, IF-2 and IF-3 are released leaving the mature 70S translation initiation complex. This is Translation initiation factor IF-1, chloroplastic from Acorus calamus var. americanus (American sweet flag).